Here is a 107-residue protein sequence, read N- to C-terminus: Ig kappa chain V-VI region XRPC 24 (107 aa).

The tract at residues 1–23 (EIVLTQSPAITAASLGQKVTITC) is framework-1. Cysteines 23 and 87 form a disulfide. The interval 24–33 (SASSSVSYMH) is complementarity-determining-1. The segment at 34 to 48 (WYQQKSGTSPKPWIY) is framework-2. The complementarity-determining-2 stretch occupies residues 49 to 55 (EISKLAS). The tract at residues 56-87 (GVPARFSGSGSGTSYSLTISSMEAEDAAIYYC) is framework-3. The segment at 88-96 (QQWNYPLIT) is complementarity-determining-3. The segment at 97 to 106 (FGSGTKLEIK) is framework-4.

The protein is Ig kappa chain V-VI region XRPC 24 of Mus musculus (Mouse).